The sequence spans 397 residues: Cytochrome b (397 aa).

4 helical membrane-spanning segments follow: residues 38–58, 82–104, 119–139, and 185–205; these read FGSLAGICLVIQIVTGVFLAM, WLLRYMHANGASMFFIVVYLHIF, VWCLGVVIFLLMIVTAFIGYV, and FFSLHYLLPFILVGASLLHLA. Residues His88 and His102 each coordinate heme b. Heme b contacts are provided by His189 and His203. An a ubiquinone-binding site is contributed by His208. A run of 4 helical transmembrane segments spans residues 231-251, 295-315, 327-347, and 354-373; these read FYVKDLVGWVAFAIFFSIWIF, AGGVAAIALVFISLLALPFFK, IYQGIFWLLLADCLLLGWIGC, and FVTIGQISSFFFFLFFAITP.

It belongs to the cytochrome b family. In terms of assembly, the main subunits of complex b-c1 are: cytochrome b, cytochrome c1 and the Rieske protein. Heme b serves as cofactor.

The protein localises to the mitochondrion inner membrane. In terms of biological role, component of the ubiquinol-cytochrome c reductase complex (complex III or cytochrome b-c1 complex) that is part of the mitochondrial respiratory chain. The b-c1 complex mediates electron transfer from ubiquinol to cytochrome c. Contributes to the generation of a proton gradient across the mitochondrial membrane that is then used for ATP synthesis. In Oryza sativa subsp. indica (Rice), this protein is Cytochrome b (MT-CYB).